A 256-amino-acid polypeptide reads, in one-letter code: tRNA-cytidine(32) 2-sulfurtransferase (256 aa).

The PP-loop motif signature appears at 35-40; sequence SGGKDS. [4Fe-4S] cluster is bound by residues C110, C113, and C201.

It belongs to the TtcA family. In terms of assembly, homodimer. Mg(2+) is required as a cofactor. The cofactor is [4Fe-4S] cluster.

It localises to the cytoplasm. It carries out the reaction cytidine(32) in tRNA + S-sulfanyl-L-cysteinyl-[cysteine desulfurase] + AH2 + ATP = 2-thiocytidine(32) in tRNA + L-cysteinyl-[cysteine desulfurase] + A + AMP + diphosphate + H(+). Its pathway is tRNA modification. In terms of biological role, catalyzes the ATP-dependent 2-thiolation of cytidine in position 32 of tRNA, to form 2-thiocytidine (s(2)C32). The sulfur atoms are provided by the cysteine/cysteine desulfurase (IscS) system. The protein is tRNA-cytidine(32) 2-sulfurtransferase of Coxiella burnetii (strain CbuG_Q212) (Coxiella burnetii (strain Q212)).